A 528-amino-acid polypeptide reads, in one-letter code: MGPILYCILACMSFHANVNVCHIFLQMWRPTEAKVYLPPVSVSKVVSTEEYVTRTNIYYYAGSTRLLAVGHPYYPIKDTNGKRKIAVPKVSGLQYRVFRIRLPDPNKFGFPDASFYNPDKERLVWACAGVEVGRGQPLGIGTSGNPFMNKLEDTENAAKYIGGNIADSRECMSVDYKQTQLCIVGCKPPLGEHWGTGTPCGTQNAGECPPLELKNTTIQDGDMIDVGFGAMDFKALQANKSDVPIDISNTICKYPDYLGMAADPYGDSMWFYIRREQMFVRHLFNRAGTVGDAIPDDLMIKGTGNTASPSSCVFYPTPSGSMVSSDAQIFNKPYWLQKAQGQNNGICWHNQLFLTVVDTTRSTNFSVCVGTQSTSTTAPYANSNFKEYLRHAEEYDLQFVFQLCKINLTTDVMTYIHSMSSSILEQWNFGLTPPPSGTLEETYRYVTSQAITCQRPQPPKETEDPYGKMTFWEVDLKEKFSAELDQFALGRKFLLQLGMRARPRLQASKRSAPSSSSTAPKKKRAKRI.

A disordered region spans residues 504 to 528 (RLQASKRSAPSSSSTAPKKKRAKRI). The span at 508–519 (SKRSAPSSSSTA) shows a compositional bias: low complexity.

This sequence belongs to the papillomaviridae L1 protein family. As to quaternary structure, self-assembles into homopentamers. The capsid has an icosahedral symmetry and consists of 72 capsomers, with each capsomer being a pentamer of L1. Interacts with the minor capsid protein L2; this interaction is necessary for viral genome encapsidation. Interacts with protein E2; this interaction enhances E2-dependent replication and transcription activation.

The protein resides in the virion. The protein localises to the host nucleus. Its function is as follows. Forms an icosahedral capsid with a T=7 symmetry and a 50 nm diameter. The capsid is composed of 72 pentamers linked to each other by disulfide bonds and associated with L2 proteins. Binds to heparan sulfate proteoglycans on cell surface of basal layer keratinocytes to provide initial virion attachment. This binding mediates a conformational change in the virus capsid that facilitates efficient infection. The virion enters the host cell via endocytosis. During virus trafficking, L1 protein dissociates from the viral DNA and the genomic DNA is released to the host nucleus. The virion assembly takes place within the cell nucleus. Encapsulates the genomic DNA together with protein L2. The polypeptide is Major capsid protein L1 (Human papillomavirus type 34).